The primary structure comprises 385 residues: 1-deoxy-D-xylulose 5-phosphate reductoisomerase (385 aa).

Residues threonine 13, glycine 14, serine 15, isoleucine 16, asparagine 40, and asparagine 122 each contribute to the NADPH site. Residue lysine 123 participates in 1-deoxy-D-xylulose 5-phosphate binding. Glutamate 124 is a binding site for NADPH. A Mn(2+)-binding site is contributed by aspartate 148. 1-deoxy-D-xylulose 5-phosphate contacts are provided by serine 149, glutamate 150, serine 177, and histidine 200. Glutamate 150 lines the Mn(2+) pocket. Glycine 206 is an NADPH binding site. Residues serine 213, asparagine 218, lysine 219, and glutamate 222 each coordinate 1-deoxy-D-xylulose 5-phosphate. A Mn(2+)-binding site is contributed by glutamate 222.

Belongs to the DXR family. The cofactor is Mg(2+). Mn(2+) is required as a cofactor.

The enzyme catalyses 2-C-methyl-D-erythritol 4-phosphate + NADP(+) = 1-deoxy-D-xylulose 5-phosphate + NADPH + H(+). The protein operates within isoprenoid biosynthesis; isopentenyl diphosphate biosynthesis via DXP pathway; isopentenyl diphosphate from 1-deoxy-D-xylulose 5-phosphate: step 1/6. Functionally, catalyzes the NADPH-dependent rearrangement and reduction of 1-deoxy-D-xylulose-5-phosphate (DXP) to 2-C-methyl-D-erythritol 4-phosphate (MEP). The polypeptide is 1-deoxy-D-xylulose 5-phosphate reductoisomerase (Francisella tularensis subsp. novicida (strain U112)).